A 557-amino-acid polypeptide reads, in one-letter code: Aerobic glycerol-3-phosphate dehydrogenase (557 aa).

Residue 21–49 (DLVIIGGGITGAGIALDASERGMKVALVE) participates in FAD binding.

It belongs to the FAD-dependent glycerol-3-phosphate dehydrogenase family. Requires FAD as cofactor.

The protein resides in the cytoplasm. It carries out the reaction a quinone + sn-glycerol 3-phosphate = dihydroxyacetone phosphate + a quinol. Its pathway is polyol metabolism; glycerol degradation via glycerol kinase pathway; glycerone phosphate from sn-glycerol 3-phosphate (aerobic route): step 1/1. The polypeptide is Aerobic glycerol-3-phosphate dehydrogenase (glpD) (Staphylococcus aureus (strain MRSA252)).